The primary structure comprises 295 residues: Ribosomal RNA small subunit methyltransferase A (295 aa).

Residues N29, L31, G56, E77, D102, and N128 each coordinate S-adenosyl-L-methionine.

Belongs to the class I-like SAM-binding methyltransferase superfamily. rRNA adenine N(6)-methyltransferase family. RsmA subfamily.

Its subcellular location is the cytoplasm. It catalyses the reaction adenosine(1518)/adenosine(1519) in 16S rRNA + 4 S-adenosyl-L-methionine = N(6)-dimethyladenosine(1518)/N(6)-dimethyladenosine(1519) in 16S rRNA + 4 S-adenosyl-L-homocysteine + 4 H(+). Its function is as follows. Specifically dimethylates two adjacent adenosines (A1518 and A1519) in the loop of a conserved hairpin near the 3'-end of 16S rRNA in the 30S particle. May play a critical role in biogenesis of 30S subunits. The chain is Ribosomal RNA small subunit methyltransferase A from Listeria monocytogenes serotype 4b (strain CLIP80459).